The sequence spans 273 residues: uncharacterized protein (273 aa).

This sequence belongs to the ycf23 family.

The protein localises to the plastid. Its subcellular location is the chloroplast. This is an uncharacterized protein from Pyropia yezoensis (Susabi-nori).